A 354-amino-acid polypeptide reads, in one-letter code: Methionine import ATP-binding protein MetN (354 aa).

The region spanning 8–250 (LDHIDITFHQ…PREDLTKDFI (243 aa)) is the ABC transporter domain. 42-49 (GYSGAGKS) contributes to the ATP binding site.

The protein belongs to the ABC transporter superfamily. Methionine importer (TC 3.A.1.24) family. As to quaternary structure, the complex is composed of two ATP-binding proteins (MetN), two transmembrane proteins (MetI) and a solute-binding protein (MetQ).

Its subcellular location is the cell membrane. The catalysed reaction is L-methionine(out) + ATP + H2O = L-methionine(in) + ADP + phosphate + H(+). The enzyme catalyses D-methionine(out) + ATP + H2O = D-methionine(in) + ADP + phosphate + H(+). Its function is as follows. Part of the ABC transporter complex MetNIQ involved in methionine import. Responsible for energy coupling to the transport system. This chain is Methionine import ATP-binding protein MetN, found in Streptococcus mutans serotype c (strain ATCC 700610 / UA159).